The following is a 350-amino-acid chain: Protein CONSERVED ONLY IN THE GREEN LINEAGE 160, chloroplastic (350 aa).

The transit peptide at 1–46 directs the protein to the chloroplast; that stretch reads MAILSYISATSTTPPIPQDQSPNSRLPTKIILPNKKPEKWSTGVAP. A compositionally biased stretch (polar residues) spans 7 to 26; sequence ISATSTTPPIPQDQSPNSRL. A disordered region spans residues 7 to 58; the sequence is ISATSTTPPIPQDQSPNSRLPTKIILPNKKPEKWSTGVAPGEYGGPPTTTKL. Ser117 is subject to Phosphoserine. 4 helical membrane-spanning segments follow: residues 213 to 233, 239 to 259, 276 to 296, and 304 to 324; these read KNKI…SAYI, IALS…MLGN, ANQP…RWNA, and FMHL…IATF.

It localises to the plastid. The protein resides in the chloroplast thylakoid membrane. Functionally, facilitates the assembly of the membrane proton channel of the chloroplastic F-type ATPase. Specifically required for the efficient assembly and integration of the CF(0) subunit c into the chloroplastic ATPase complex in the thylakoid membrane. The chain is Protein CONSERVED ONLY IN THE GREEN LINEAGE 160, chloroplastic from Arabidopsis thaliana (Mouse-ear cress).